We begin with the raw amino-acid sequence, 48 residues long: Small polypeptide DEVIL 19 (48 aa).

A required for DVL/RTFL small polypeptide activity region spans residues 13–44; it reads AFTSKCVSLVKEQRARLYILRRCATMLCCWYI. A helical transmembrane segment spans residues 25-42; that stretch reads QRARLYILRRCATMLCCW.

The protein belongs to the DVL/RTFL small polypeptides family.

It is found in the cell membrane. Its function is as follows. Small polypeptide acting as a regulatory molecule which coordinates cellular responses required for differentiation, growth and development, probably by restricting polar cell proliferation in lateral organs and coordinating socket cell recruitment and differentiation at trichome sites. The protein is Small polypeptide DEVIL 19 of Arabidopsis thaliana (Mouse-ear cress).